The primary structure comprises 445 residues: Tubulin beta-2B chain (445 aa).

The MREI motif signature appears at 1 to 4 (MREI). Q11 provides a ligand contact to GTP. At S40 the chain carries Phosphoserine. Phosphothreonine is present on T55. Position 58 is an N6-acetyllysine; alternate (K58). Residue K58 is modified to N6-succinyllysine; alternate. K58 participates in a covalent cross-link: Glycyl lysine isopeptide (Lys-Gly) (interchain with G-Cter in ubiquitin); alternate. Positions 69, 138, 142, 143, and 144 each coordinate GTP. E69 is a Mg(2+) binding site. A Phosphoserine; by CDK1 modification is found at S172. Positions 204 and 226 each coordinate GTP. T285 and T290 each carry phosphothreonine. R318 is subject to Omega-N-methylarginine. K324 participates in a covalent cross-link: Glycyl lysine isopeptide (Lys-Gly) (interchain with G-Cter in ubiquitin). The segment at 422-445 (YQQYQDATADEQGEFEEEEGEDEA) is disordered. A compositionally biased stretch (acidic residues) spans 429–445 (TADEQGEFEEEEGEDEA). The residue at position 438 (E438) is a 5-glutamyl polyglutamate.

It belongs to the tubulin family. Dimer of alpha and beta chains. A typical microtubule is a hollow water-filled tube with an outer diameter of 25 nm and an inner diameter of 15 nM. Alpha-beta heterodimers associate head-to-tail to form protofilaments running lengthwise along the microtubule wall with the beta-tubulin subunit facing the microtubule plus end conferring a structural polarity. Microtubules usually have 13 protofilaments but different protofilament numbers can be found in some organisms and specialized cells. The cofactor is Mg(2+). Post-translationally, some glutamate residues at the C-terminus are polyglycylated, resulting in polyglycine chains on the gamma-carboxyl group. Glycylation is mainly limited to tubulin incorporated into axonemes (cilia and flagella) whereas glutamylation is prevalent in neuronal cells, centrioles, axonemes, and the mitotic spindle. Both modifications can coexist on the same protein on adjacent residues, and lowering polyglycylation levels increases polyglutamylation, and reciprocally. The precise function of polyglycylation is still unclear. In terms of processing, some glutamate residues at the C-terminus are polyglutamylated, resulting in polyglutamate chains on the gamma-carboxyl group. Polyglutamylation plays a key role in microtubule severing by spastin (SPAST). SPAST preferentially recognizes and acts on microtubules decorated with short polyglutamate tails: severing activity by SPAST increases as the number of glutamates per tubulin rises from one to eight, but decreases beyond this glutamylation threshold. Phosphorylated on Ser-172 by CDK1 during the cell cycle, from metaphase to telophase, but not in interphase. This phosphorylation inhibits tubulin incorporation into microtubules.

The protein resides in the cytoplasm. The protein localises to the cytoskeleton. Functionally, tubulin is the major constituent of microtubules, a cylinder consisting of laterally associated linear protofilaments composed of alpha- and beta-tubulin heterodimers. Microtubules grow by the addition of GTP-tubulin dimers to the microtubule end, where a stabilizing cap forms. Below the cap, tubulin dimers are in GDP-bound state, owing to GTPase activity of alpha-tubulin. Implicated in neuronal migration. The sequence is that of Tubulin beta-2B chain (TUBB2B) from Bos taurus (Bovine).